The following is a 735-amino-acid chain: 1,4-alpha-glucan branching enzyme GlgB 1 (735 aa).

Asp418 serves as the catalytic Nucleophile. Glu471 (proton donor) is an active-site residue.

This sequence belongs to the glycosyl hydrolase 13 family. GlgB subfamily. Monomer.

It catalyses the reaction Transfers a segment of a (1-&gt;4)-alpha-D-glucan chain to a primary hydroxy group in a similar glucan chain.. Its pathway is glycan biosynthesis; glycogen biosynthesis. Its function is as follows. Catalyzes the formation of the alpha-1,6-glucosidic linkages in glycogen by scission of a 1,4-alpha-linked oligosaccharide from growing alpha-1,4-glucan chains and the subsequent attachment of the oligosaccharide to the alpha-1,6 position. This is 1,4-alpha-glucan branching enzyme GlgB 1 from Rhizobium johnstonii (strain DSM 114642 / LMG 32736 / 3841) (Rhizobium leguminosarum bv. viciae).